The chain runs to 185 residues: uncharacterized protein (185 aa).

3 helical membrane-spanning segments follow: residues 9–29 (LVAA…WAFL), 72–92 (VLFF…ILIV), and 111–131 (FFFI…IPFL).

It is found in the cell membrane. This is an uncharacterized protein from Bacillus subtilis (strain 168).